The sequence spans 240 residues: UDP-2,3-diacylglucosamine hydrolase (240 aa).

Residues aspartate 8, histidine 10, aspartate 41, asparagine 79, and histidine 114 each coordinate Mn(2+). A substrate-binding site is contributed by 79 to 80; the sequence is NR. Aspartate 122, serine 160, asparagine 164, lysine 167, and histidine 195 together coordinate substrate. Positions 195 and 197 each coordinate Mn(2+).

Belongs to the LpxH family. Mn(2+) serves as cofactor.

Its subcellular location is the cell inner membrane. It carries out the reaction UDP-2-N,3-O-bis[(3R)-3-hydroxytetradecanoyl]-alpha-D-glucosamine + H2O = 2-N,3-O-bis[(3R)-3-hydroxytetradecanoyl]-alpha-D-glucosaminyl 1-phosphate + UMP + 2 H(+). It functions in the pathway glycolipid biosynthesis; lipid IV(A) biosynthesis; lipid IV(A) from (3R)-3-hydroxytetradecanoyl-[acyl-carrier-protein] and UDP-N-acetyl-alpha-D-glucosamine: step 4/6. Its function is as follows. Hydrolyzes the pyrophosphate bond of UDP-2,3-diacylglucosamine to yield 2,3-diacylglucosamine 1-phosphate (lipid X) and UMP by catalyzing the attack of water at the alpha-P atom. Involved in the biosynthesis of lipid A, a phosphorylated glycolipid that anchors the lipopolysaccharide to the outer membrane of the cell. The chain is UDP-2,3-diacylglucosamine hydrolase from Shigella sonnei (strain Ss046).